The following is a 147-amino-acid chain: Myoglobin (147 aa).

In terms of domain architecture, Globin spans Ala-2–Lys-141. His-60 contributes to the nitrite binding site. His-60 is a binding site for O2. His-89 contributes to the heme b binding site.

Belongs to the globin family. As to quaternary structure, monomeric.

The protein resides in the cytoplasm. It is found in the sarcoplasm. It carries out the reaction Fe(III)-heme b-[protein] + nitric oxide + H2O = Fe(II)-heme b-[protein] + nitrite + 2 H(+). The enzyme catalyses H2O2 + AH2 = A + 2 H2O. Functionally, monomeric heme protein which primary function is to store oxygen and facilitate its diffusion within muscle tissues. Reversibly binds oxygen through a pentacoordinated heme iron and enables its timely and efficient release as needed during periods of heightened demand. Depending on the oxidative conditions of tissues and cells, and in addition to its ability to bind oxygen, it also has a nitrite reductase activity whereby it regulates the production of bioactive nitric oxide. Under stress conditions, like hypoxia and anoxia, it also protects cells against reactive oxygen species thanks to its pseudoperoxidase activity. This chain is Myoglobin (mb), found in Sarda chiliensis (Pacific bonito).